Consider the following 203-residue polypeptide: Peptidyl-tRNA hydrolase (203 aa).

Tyr-18 provides a ligand contact to tRNA. The Proton acceptor role is filled by His-23. Residues Tyr-69, Asn-71, and Asn-117 each contribute to the tRNA site.

This sequence belongs to the PTH family. In terms of assembly, monomer.

It localises to the cytoplasm. It catalyses the reaction an N-acyl-L-alpha-aminoacyl-tRNA + H2O = an N-acyl-L-amino acid + a tRNA + H(+). Functionally, hydrolyzes ribosome-free peptidyl-tRNAs (with 1 or more amino acids incorporated), which drop off the ribosome during protein synthesis, or as a result of ribosome stalling. Its function is as follows. Catalyzes the release of premature peptidyl moieties from peptidyl-tRNA molecules trapped in stalled 50S ribosomal subunits, and thus maintains levels of free tRNAs and 50S ribosomes. The chain is Peptidyl-tRNA hydrolase from Parasynechococcus marenigrum (strain WH8102).